A 603-amino-acid chain; its full sequence is Phosphoribosylformylglycinamidine synthase subunit PurL (603 aa).

His32 is a catalytic residue. ATP-binding residues include Tyr35 and Lys68. Glu70 lines the Mg(2+) pocket. Residues 71-74 (SHNH) and Arg93 contribute to the substrate site. The Proton acceptor role is filled by His72. Asp94 contacts Mg(2+). Residues Asp107 and 136-139 (GELR) contribute to the ATP site. Substrate is bound by residues Gly189 and Gln208. Position 236 (Asp236) interacts with Mg(2+). Residue 280-282 (ESQ) coordinates substrate. Residues Gly388, Lys429, Asn442, and Gly477 each contribute to the ATP site. Asn478 provides a ligand contact to Mg(2+). Residue Ser480 coordinates substrate. ATP-binding residues include Ser549 and His556.

This sequence belongs to the FGAMS family. As to quaternary structure, monomer. Part of the FGAM synthase complex composed of 1 PurL, 1 PurQ and 2 PurS subunits.

The protein resides in the cytoplasm. The enzyme catalyses N(2)-formyl-N(1)-(5-phospho-beta-D-ribosyl)glycinamide + L-glutamine + ATP + H2O = 2-formamido-N(1)-(5-O-phospho-beta-D-ribosyl)acetamidine + L-glutamate + ADP + phosphate + H(+). Its pathway is purine metabolism; IMP biosynthesis via de novo pathway; 5-amino-1-(5-phospho-D-ribosyl)imidazole from N(2)-formyl-N(1)-(5-phospho-D-ribosyl)glycinamide: step 1/2. Part of the phosphoribosylformylglycinamidine synthase complex involved in the purines biosynthetic pathway. Catalyzes the ATP-dependent conversion of formylglycinamide ribonucleotide (FGAR) and glutamine to yield formylglycinamidine ribonucleotide (FGAM) and glutamate. The FGAM synthase complex is composed of three subunits. PurQ produces an ammonia molecule by converting glutamine to glutamate. PurL transfers the ammonia molecule to FGAR to form FGAM in an ATP-dependent manner. PurS interacts with PurQ and PurL and is thought to assist in the transfer of the ammonia molecule from PurQ to PurL. In Thermotoga maritima (strain ATCC 43589 / DSM 3109 / JCM 10099 / NBRC 100826 / MSB8), this protein is Phosphoribosylformylglycinamidine synthase subunit PurL.